Here is a 459-residue protein sequence, read N- to C-terminus: Nucleobindin-1 (459 aa).

The N-terminal stretch at 1-25 (MPTSVPRGAPFLLLPPLLMLSAVLA) is a signal peptide. Serine 85 carries the phosphoserine modification. Threonine 147 is modified (phosphothreonine). Residues 149–217 (EARDLELLIQ…QQRRHREHPK (69 aa)) are a coiled coil. Residues 171-217 (HHEEFKRYEMLKEHERRRYLESLGEEQRKEAERKLQEQQRRHREHPK) mediate DNA binding. The span at 192 to 209 (SLGEEQRKEAERKLQEQQ) shows a compositional bias: basic and acidic residues. Residues 192–220 (SLGEEQRKEAERKLQEQQRRHREHPKVNV) are disordered. Residues 227–320 (LKEVWEELDG…VTLEEFLAST (94 aa)) form a binds to GNAI2 and GNAI3 region. 2 EF-hand domains span residues 239–274 (PNRFNPKTFFILHDINSDGVLDEQELEALFTKELEK) and 291–326 (ERLRMREHVMKNVDTNQDRLVTLEEFLASTQRKEFG). 8 residues coordinate Ca(2+): aspartate 252, asparagine 254, aspartate 256, glutamate 263, aspartate 304, asparagine 306, aspartate 308, and glutamate 315. A GBA motif is present at residues 302-332 (NVDTNQDRLVTLEEFLASTQRKEFGETAEGW). Residues 340 to 407 (AYTEEELKRF…RKQQQQEQSA (68 aa)) adopt a coiled-coil conformation. At serine 368 the chain carries Phosphoserine. Positions 393–459 (LQMEQRKQQQ…VLPQLDSQHL (67 aa)) are disordered. The segment covering 433 to 445 (DQKDVPASEKKVP) has biased composition (basic and acidic residues). A Phosphoserine modification is found at serine 456.

The protein belongs to the nucleobindin family. As to quaternary structure, interacts (via GBA motif) with guanine nucleotide-binding protein G(i) alpha subunits GNAI1, GNAI2 and GNAI3 with higher affinity for GNAI1 and GNAI3 than for GNAI2. Preferentially interacts with inactive rather than active GNAI3. Interaction with GNAI3 is inhibited when NUCB1 binds calcium, probably due to a conformational change which renders the GBA motif inaccessible. In terms of tissue distribution, minor constituent of the mineralized matrix of bone. Detected in calvaria, rib cartilage, liver, kidney, spleen, brain, lung, skeletal and heart muscle with highest expression in calvaria and approximately half the amount in kidney, liver and brain.

The protein resides in the golgi apparatus. Its subcellular location is the cis-Golgi network membrane. It localises to the cytoplasm. The protein localises to the secreted. Its function is as follows. Major calcium-binding protein of the Golgi which may have a role in calcium homeostasis. Acts as a non-receptor guanine nucleotide exchange factor which binds to and activates alpha subunits of guanine nucleotide-binding proteins (G proteins). In Rattus norvegicus (Rat), this protein is Nucleobindin-1 (Nucb1).